The sequence spans 296 residues: Phosphoribosylaminoimidazole-succinocarboxamide synthase (296 aa).

Belongs to the SAICAR synthetase family.

It carries out the reaction 5-amino-1-(5-phospho-D-ribosyl)imidazole-4-carboxylate + L-aspartate + ATP = (2S)-2-[5-amino-1-(5-phospho-beta-D-ribosyl)imidazole-4-carboxamido]succinate + ADP + phosphate + 2 H(+). Its pathway is purine metabolism; IMP biosynthesis via de novo pathway; 5-amino-1-(5-phospho-D-ribosyl)imidazole-4-carboxamide from 5-amino-1-(5-phospho-D-ribosyl)imidazole-4-carboxylate: step 1/2. The protein is Phosphoribosylaminoimidazole-succinocarboxamide synthase of Geobacter sulfurreducens (strain ATCC 51573 / DSM 12127 / PCA).